The primary structure comprises 406 residues: Cysteine desulfurase (406 aa).

Lys-226 bears the N6-(pyridoxal phosphate)lysine mark. Cys-364 (cysteine persulfide intermediate) is an active-site residue.

It belongs to the class-V pyridoxal-phosphate-dependent aminotransferase family. Csd subfamily. As to quaternary structure, homodimer. Interacts with SufE and the SufBCD complex composed of SufB, SufC and SufD. The interaction with SufE is required to mediate the direct transfer of the sulfur atom from the S-sulfanylcysteine. Requires pyridoxal 5'-phosphate as cofactor.

It localises to the cytoplasm. It catalyses the reaction (sulfur carrier)-H + L-cysteine = (sulfur carrier)-SH + L-alanine. The catalysed reaction is L-selenocysteine + AH2 = hydrogenselenide + L-alanine + A + H(+). It functions in the pathway cofactor biosynthesis; iron-sulfur cluster biosynthesis. Its function is as follows. Cysteine desulfurases mobilize the sulfur from L-cysteine to yield L-alanine, an essential step in sulfur metabolism for biosynthesis of a variety of sulfur-containing biomolecules. Component of the suf operon, which is activated and required under specific conditions such as oxidative stress and iron limitation. Acts as a potent selenocysteine lyase in vitro, that mobilizes selenium from L-selenocysteine. Selenocysteine lyase activity is however unsure in vivo. The sequence is that of Cysteine desulfurase from Escherichia coli O6:K15:H31 (strain 536 / UPEC).